The primary structure comprises 400 residues: Argininosuccinate synthase (400 aa).

Residues 10-18 and Ala38 each bind ATP; that span reads AYSGGVDTS. Tyr89 is a binding site for L-citrulline. An ATP-binding site is contributed by Gly119. Positions 121, 125, and 126 each coordinate L-aspartate. An L-citrulline-binding site is contributed by Asn125. The L-citrulline site is built by Arg129, Ser177, Ser186, Glu262, and Tyr274.

The protein belongs to the argininosuccinate synthase family. Type 1 subfamily. Homotetramer.

It is found in the cytoplasm. The catalysed reaction is L-citrulline + L-aspartate + ATP = 2-(N(omega)-L-arginino)succinate + AMP + diphosphate + H(+). The protein operates within amino-acid biosynthesis; L-arginine biosynthesis; L-arginine from L-ornithine and carbamoyl phosphate: step 2/3. This is Argininosuccinate synthase from Trichormus variabilis (strain ATCC 29413 / PCC 7937) (Anabaena variabilis).